A 209-amino-acid polypeptide reads, in one-letter code: A-type ATP synthase subunit D (209 aa).

Belongs to the V-ATPase D subunit family. Has multiple subunits with at least A(3), B(3), C, D, E, F, H, I and proteolipid K(x).

The protein resides in the cell membrane. Its function is as follows. Component of the A-type ATP synthase that produces ATP from ADP in the presence of a proton gradient across the membrane. The protein is A-type ATP synthase subunit D of Thermoplasma volcanium (strain ATCC 51530 / DSM 4299 / JCM 9571 / NBRC 15438 / GSS1).